The following is a 231-amino-acid chain: Ribose-5-phosphate isomerase A (231 aa).

Substrate contacts are provided by residues 28–31 (TGST), 83–86 (DGAD), and 96–99 (KGGG). The active-site Proton acceptor is the glutamate 105. A substrate-binding site is contributed by lysine 123.

It belongs to the ribose 5-phosphate isomerase family. In terms of assembly, homodimer.

It catalyses the reaction aldehydo-D-ribose 5-phosphate = D-ribulose 5-phosphate. It participates in carbohydrate degradation; pentose phosphate pathway; D-ribose 5-phosphate from D-ribulose 5-phosphate (non-oxidative stage): step 1/1. In terms of biological role, catalyzes the reversible conversion of ribose-5-phosphate to ribulose 5-phosphate. In Agrobacterium fabrum (strain C58 / ATCC 33970) (Agrobacterium tumefaciens (strain C58)), this protein is Ribose-5-phosphate isomerase A.